Here is a 119-residue protein sequence, read N- to C-terminus: Beta-2-microglobulin (119 aa).

The first 20 residues, 1-20 (MASSVVVALLVLLSLSGLEA), serve as a signal peptide directing secretion. In terms of domain architecture, Ig-like C1-type spans 25–114 (PKIQVYSRHP…VTFSTPKTVK (90 aa)). Cysteines 45 and 100 form a disulfide.

The protein belongs to the beta-2-microglobulin family. Heterodimer of an alpha chain and a beta chain. Beta-2-microglobulin is the beta-chain of major histocompatibility complex class I molecules.

The protein localises to the secreted. Component of the class I major histocompatibility complex (MHC). Involved in the presentation of peptide antigens to the immune system. The chain is Beta-2-microglobulin (B2M) from Callithrix aurita (White-eared marmoset).